Here is a 209-residue protein sequence, read N- to C-terminus: Thymidylate kinase (209 aa).

10 to 17 (GIDGCGKT) contributes to the ATP binding site.

Belongs to the thymidylate kinase family.

The enzyme catalyses dTMP + ATP = dTDP + ADP. Its function is as follows. Phosphorylation of dTMP to form dTDP in both de novo and salvage pathways of dTTP synthesis. The sequence is that of Thymidylate kinase from Synechococcus sp. (strain CC9605).